The sequence spans 140 residues: uncharacterized protein (140 aa).

Transmembrane regions (helical) follow at residues 4-21 and 26-48; these read ILKIGILGFGAVFGYLFG and LVKVLVCFIVADYISGLLASGYL.

It belongs to the bacteriophage holin family. Cp-1 holin subfamily.

It is found in the cell membrane. This is an uncharacterized protein from Listeria innocua serovar 6a (strain ATCC BAA-680 / CLIP 11262).